The primary structure comprises 251 residues: Large ribosomal subunit protein uL16m (251 aa).

The transit peptide at 1–29 (MWRLLTRAPAPLWRMHFSDTWAALPTSAG) directs the protein to the mitochondrion.

Belongs to the universal ribosomal protein uL16 family. As to quaternary structure, component of the mitochondrial ribosome large subunit (39S) which comprises a 16S rRNA and about 50 distinct proteins.

The protein resides in the mitochondrion. This Rattus norvegicus (Rat) protein is Large ribosomal subunit protein uL16m (Mrpl16).